The following is a 1658-amino-acid chain: MSKKKETFTPRANKLKLTTPRRKLKILSSLLDADEDSKMKDQHGYSRVHNDKYRVAKPTQHSTLHESISSRRSSHIHNKSLHEDSARALSWVDSLINRGKSILTTLEKEDALFERSLEEERQRFQLHDSLMNKYTGNSKSHQRLIDLRKSQYGTDTSFQNNDEIPLDSFISSPLPDAEDESSSNIDSDKDEDLEGKQSLIKDFDLENDEYELSEEEKNSDGQSSPSIMILSDEEYAEEGALQDVSNDEYAEEEGQVERKNIGQEQANVENATQISSSDSSEGQNYSEGVEMELEDDIDVESDAEKDESQGAEGTEHSVDFSKYMQPRTDNTKIPVIEKYESDEHKVHQRYSEDGAFDFGSVNISVDDESEDEESQAESYSANAENVYHHNEHELDDKELIEDIESSDSESQSAQESEQGSEDDFEYKMKNEKSTSEETENTSESRDQGFAKDAYTKNKVEQQENDEEPEKDDIIRSSLDKNFHGNNNKSEYSENVLENETDPAIVERENQINDVEGYDVTGKSVESDLHEHSPDNLYDLAARAMLQFQQSRNSNCPQKEEQVSESYLGHSNGSNLSGRSLDESEEQIPLKDFTGENNNNLKTDRGDLSSSVEIEVEKVSEKKLDGSTEKELVPLSTDTTINNSSLGNEDSIYYSLDDADAISENLTDVPLMEIKTTPKYEVVISESVYSSTSYEDNTVAMPPQVEYTSPFMNDPFNSLNDDYEKKHDLLKSTLAALAPAFTKKDAEFVEAGVTKSCLTSTSGHTNIFHTSKETKQVSDLDESTENVTFENENTGDENKNQSKNFPGVANSTDKSTEDNTDEKYFSAINYTNVTGDSSCEDIIETASNVEENLRYCEKDMNEAEMSSGDECVKQNDDGSKTQISFSTDSPDNFQESNDNTEFSSTKYKVRNSDLEDDESLKKELTKAEVVDKLDEEESEDSYEQDYADPEPGNDEGSNENIVKGTKKDTLGIVEPENEKVNKVHEEETLFEANVSSSVNVQNKDMHTDVINQEAQANYEAGERKYYIQNTDTEEAHISIIERIDENAIGNNMEIPERSCVEKTHNEVLFERRATTIENTKALENNTNMHDQVSQACSDSDRDQDSTAEKNVEGSAKHNLDIRVSSSEIESVEPLKPESDRSNIFSSPIRVIGAVVKGVGKVVDVAESFVKKIDVMDSESDDNVDIGDYNQDIFNKSNSTDASVNMKSVSSKERDSDEDEAVILGGVTAEAHNDNGNNSRVINIDPTTNGAYEEDSEVFRQQVKDKENLHKSEEPLVEGLQSEQHFEKKDHSENEEEFDTIYGDITSANIHSNAPDDIKRQQLLKNLSDLENYSQRLIEDSRRGKNQEESDEVNTSRERDLTFEKSVNEKYAGAIEEDTFSELDISIQHPEHEEDLDLSNNQERSIEELNSEPEEAELYELEIEGPTETAASSKMNDDERQRGNIPSTDLPSDPPSDKEEVTDSYPYSNSENITAEKSAPTSPEVYEIFSDTPNEVPMEINDEIPATTLEKHDKTNVTSVLDDRSEHLSSHDVDNEPHDNSINIKVNEGEEPEHQAVDIPVKVEVKEEQEEMPSKSVLEEQKPSMELINDKSSPENNNDEETNREKDKTKAKKKSRKRNYNSRRRKRKITEGSSAASNTKRRRGHEPKSRGQNTHPSVDK.

Positions 36-54 (DSKMKDQHGYSRVHNDKYR) are enriched in basic and acidic residues. 2 disordered regions span residues 36–76 (DSKM…SSHI) and 156–499 (TSFQ…LENE). Acidic residues-rich tracts occupy residues 205–214 (LENDEYELSE) and 245–254 (SNDEYAEEEG). Positions 262-286 (GQEQANVENATQISSSDSSEGQNYS) are enriched in polar residues. Acidic residues predominate over residues 289–305 (VEMELEDDIDVESDAEK). Residues 335–352 (VIEKYESDEHKVHQRYSE) are compositionally biased toward basic and acidic residues. Acidic residues predominate over residues 365–375 (VDDESEDEESQ). Over residues 386–397 (VYHHNEHELDDK) the composition is skewed to basic and acidic residues. Residues 398–407 (ELIEDIESSD) show a composition bias toward acidic residues. Over residues 408 to 417 (SESQSAQESE) the composition is skewed to low complexity. Composition is skewed to basic and acidic residues over residues 425–435 (EYKMKNEKSTS), 442–461 (SESR…KVEQ), and 471–482 (DDIIRSSLDKNF). The residue at position 500 (Thr-500) is a Phosphothreonine. Position 532 is a phosphoserine (Ser-532). Disordered regions lie at residues 550 to 584 (SRNS…DESE) and 589 to 608 (LKDF…GDLS). Residues 568–577 (GHSNGSNLSG) show a composition bias toward polar residues. Residues Ser-579, Ser-583, Ser-608, and Ser-662 each carry the phosphoserine modification. Disordered regions lie at residues 770 to 819 (SKET…EDNT), 863 to 964 (EMSS…VKGT), and 1082 to 1115 (ENNT…GSAK). The span at 800–812 (QSKNFPGVANSTD) shows a compositional bias: polar residues. A phosphoserine mark is found at Ser-865 and Ser-866. Positions 869–878 (ECVKQNDDGS) are enriched in basic and acidic residues. The span at 879–905 (KTQISFSTDSPDNFQESNDNTEFSSTK) shows a compositional bias: polar residues. Phosphoserine is present on residues Ser-888 and Ser-911. A compositionally biased stretch (basic and acidic residues) spans 918-931 (SLKKELTKAEVVDK). Residues 932–956 (LDEEESEDSYEQDYADPEPGNDEGS) show a composition bias toward acidic residues. Phosphoserine is present on residues Ser-937, Ser-1092, Ser-1096, Ser-1098, Ser-1166, Ser-1176, and Ser-1178. Residues 1082–1096 (ENNTNMHDQVSQACS) are compositionally biased toward polar residues. The span at 1097 to 1115 (DSDRDQDSTAEKNVEGSAK) shows a compositional bias: basic and acidic residues. A compositionally biased stretch (polar residues) spans 1197–1207 (STDASVNMKSV). Residues 1197-1216 (STDASVNMKSVSSKERDSDE) are disordered. Phosphoserine occurs at positions 1214 and 1254. The segment covering 1261–1272 (VKDKENLHKSEE) has biased composition (basic and acidic residues). Residues 1261-1315 (VKDKENLHKSEEPLVEGLQSEQHFEKKDHSENEEEFDTIYGDITSANIHSNAPDD) form a disordered region. Ser-1290, Ser-1326, and Ser-1332 each carry phosphoserine. Disordered stretches follow at residues 1334 to 1482 (RLIE…TSPE) and 1503 to 1658 (PATT…SVDK). Positions 1335-1366 (LIEDSRRGKNQEESDEVNTSRERDLTFEKSVN) are enriched in basic and acidic residues. Phosphoserine occurs at positions 1403, 1409, 1450, and 1454. Residues 1407–1423 (LNSEPEEAELYELEIEG) show a composition bias toward acidic residues. Positions 1463–1479 (YPYSNSENITAEKSAPT) are enriched in polar residues. Over residues 1507-1537 (LEKHDKTNVTSVLDDRSEHLSSHDVDNEPHD) the composition is skewed to basic and acidic residues. Ser-1539 carries the phosphoserine modification. Basic and acidic residues-rich tracts occupy residues 1550-1564 (PEHQ…VEVK) and 1575-1591 (VLEE…DKSS). Phosphoserine occurs at positions 1590 and 1591. Basic residues predominate over residues 1607–1626 (TKAKKKSRKRNYNSRRRKRK). Residues 1648-1658 (RGQNTHPSVDK) show a composition bias toward polar residues.

Interacts with SIR4.

Its subcellular location is the nucleus. Involved in the clustering of telomeres at the nuclear periphery, forming discrete subcompartments that accumulate a complex of histone-binding silencing factors like SIR4. Required for SIR4-mediated anchoring and partitioning of plasmids. The chain is Silent chromatin protein ESC1 (ESC1) from Saccharomyces cerevisiae (strain ATCC 204508 / S288c) (Baker's yeast).